A 79-amino-acid polypeptide reads, in one-letter code: Small ribosomal subunit protein bS18 (79 aa).

It belongs to the bacterial ribosomal protein bS18 family. Part of the 30S ribosomal subunit. Forms a tight heterodimer with protein bS6.

Binds as a heterodimer with protein bS6 to the central domain of the 16S rRNA, where it helps stabilize the platform of the 30S subunit. The polypeptide is Small ribosomal subunit protein bS18 (Listeria innocua serovar 6a (strain ATCC BAA-680 / CLIP 11262)).